The chain runs to 440 residues: Xaa-Pro dipeptidase (440 aa).

Mn(2+) is bound by residues aspartate 244, aspartate 255, histidine 336, glutamate 381, and glutamate 420.

It belongs to the peptidase M24B family. Mn(2+) is required as a cofactor. The N-terminus is blocked.

The enzyme catalyses Xaa-L-Pro dipeptide + H2O = an L-alpha-amino acid + L-proline. It catalyses the reaction diisopropyl fluorophosphate + H2O = diisopropyl phosphate + fluoride + 2 H(+). Functionally, splits dipeptides with a prolyl or hydroxyprolyl residue in the C-terminal position and a nonpolar amino acid at the N-terminal position. Also catalyzes the hydrolysis of toxic organophosphorus cholinesterase-inhibiting compounds including nerve gases such as diisopropylfluorophosphate (DFP), O-isopropyl methylphosphonofluoridate (sarin), O-pinacolyl methylphosphonofluoridate (soman), and O-cyclohexyl methylphosphonofluoridate. This is Xaa-Pro dipeptidase (pepQ) from Pseudoalteromonas haloplanktis (Alteromonas haloplanktis).